Reading from the N-terminus, the 622-residue chain is DNA mismatch repair protein MutL (622 aa).

The protein belongs to the DNA mismatch repair MutL/HexB family.

Functionally, this protein is involved in the repair of mismatches in DNA. It is required for dam-dependent methyl-directed DNA mismatch repair. May act as a 'molecular matchmaker', a protein that promotes the formation of a stable complex between two or more DNA-binding proteins in an ATP-dependent manner without itself being part of a final effector complex. This chain is DNA mismatch repair protein MutL, found in Clostridium acetobutylicum (strain ATCC 824 / DSM 792 / JCM 1419 / IAM 19013 / LMG 5710 / NBRC 13948 / NRRL B-527 / VKM B-1787 / 2291 / W).